The chain runs to 735 residues: Muskelin (735 aa).

N-acetylalanine is present on alanine 2. One can recognise a LisH domain in the interval 172 to 204 (REQEAIRLCLKHFRQHNYTEAFESLQKKTKIAL). The CTLH domain maps to 206-258 (HPMLTDMHDKLVLKGDFDACEELIEKAVNDGLFNQYISQQEYKPRWSQIIPKS). Kelch repeat units follow at residues 284 to 330 (TVYL…SCHK), 339 to 391 (QIYT…FDHQ), 400 to 458 (MIYT…SRIG), 469 to 515 (CLYV…TGFT), 526 to 578 (EIHV…SLQE), and 597 to 651 (VHYL…AQMD).

In terms of assembly, homodimer; may form higher oligomers. Identified in the CTLH complex that contains GID4, RANBP9 and/or RANBP10, MKLN1, MAEA, RMND5A (or alternatively its paralog RMND5B), GID8, ARMC8, WDR26 and YPEL5. Within this complex, MAEA, RMND5A (or alternatively its paralog RMND5B), GID8, WDR26, and RANBP9 and/or RANBP10 form the catalytic core, while GID4, MKLN1, ARMC8 and YPEL5 have ancillary roles. Interacts with RANBP9. Part of a complex consisting of RANBP9, MKLN1 and GID8. Interacts with GABRA1. Interacts with the C-terminal tail of PTGER3.

The protein localises to the cytoplasm. It localises to the cell projection. The protein resides in the ruffle. Its subcellular location is the cell cortex. It is found in the synapse. The protein localises to the postsynapse. Functionally, component of the CTLH E3 ubiquitin-protein ligase complex that selectively accepts ubiquitin from UBE2H and mediates ubiquitination and subsequent proteasomal degradation of the transcription factor HBP1. Required for internalization of the GABA receptor GABRA1 from the cell membrane via endosomes and subsequent GABRA1 degradation. Acts as a mediator of cell spreading and cytoskeletal responses to the extracellular matrix component THBS1. This chain is Muskelin (Mkln1), found in Rattus norvegicus (Rat).